The following is a 581-amino-acid chain: 2-succinyl-5-enolpyruvyl-6-hydroxy-3-cyclohexene-1-carboxylate synthase (581 aa).

Belongs to the TPP enzyme family. MenD subfamily. In terms of assembly, homodimer. Mg(2+) is required as a cofactor. The cofactor is Mn(2+). Requires thiamine diphosphate as cofactor.

It catalyses the reaction isochorismate + 2-oxoglutarate + H(+) = 5-enolpyruvoyl-6-hydroxy-2-succinyl-cyclohex-3-ene-1-carboxylate + CO2. It participates in quinol/quinone metabolism; 1,4-dihydroxy-2-naphthoate biosynthesis; 1,4-dihydroxy-2-naphthoate from chorismate: step 2/7. It functions in the pathway quinol/quinone metabolism; menaquinone biosynthesis. Catalyzes the thiamine diphosphate-dependent decarboxylation of 2-oxoglutarate and the subsequent addition of the resulting succinic semialdehyde-thiamine pyrophosphate anion to isochorismate to yield 2-succinyl-5-enolpyruvyl-6-hydroxy-3-cyclohexene-1-carboxylate (SEPHCHC). This is 2-succinyl-5-enolpyruvyl-6-hydroxy-3-cyclohexene-1-carboxylate synthase from Chlorobium phaeobacteroides (strain BS1).